Consider the following 101-residue polypeptide: NADH-quinone oxidoreductase subunit K (101 aa).

A run of 3 helical transmembrane segments spans residues 4 to 24 (LGHM…GIFL), 30 to 50 (IVLL…FVGF), and 62 to 82 (FVFF…AILV).

This sequence belongs to the complex I subunit 4L family. NDH-1 is composed of 14 different subunits. Subunits NuoA, H, J, K, L, M, N constitute the membrane sector of the complex.

The protein localises to the cell inner membrane. The catalysed reaction is a quinone + NADH + 5 H(+)(in) = a quinol + NAD(+) + 4 H(+)(out). Its function is as follows. NDH-1 shuttles electrons from NADH, via FMN and iron-sulfur (Fe-S) centers, to quinones in the respiratory chain. The immediate electron acceptor for the enzyme in this species is believed to be ubiquinone. Couples the redox reaction to proton translocation (for every two electrons transferred, four hydrogen ions are translocated across the cytoplasmic membrane), and thus conserves the redox energy in a proton gradient. This chain is NADH-quinone oxidoreductase subunit K, found in Stenotrophomonas maltophilia (strain K279a).